The primary structure comprises 277 residues: Phosphonates import ATP-binding protein PhnC 2 (277 aa).

Positions 5–253 (IHVQGLNKTF…FLNDLYGADA (249 aa)) constitute an ABC transporter domain. Residue 37–44 (GASGSGKS) coordinates ATP.

It belongs to the ABC transporter superfamily. Phosphonates importer (TC 3.A.1.9.1) family. In terms of assembly, the complex is composed of two ATP-binding proteins (PhnC), two transmembrane proteins (PhnE) and a solute-binding protein (PhnD).

It localises to the cell inner membrane. It carries out the reaction phosphonate(out) + ATP + H2O = phosphonate(in) + ADP + phosphate + H(+). Part of the ABC transporter complex PhnCDE involved in phosphonates import. Responsible for energy coupling to the transport system. In Pseudomonas syringae pv. syringae (strain B728a), this protein is Phosphonates import ATP-binding protein PhnC 2.